Reading from the N-terminus, the 435-residue chain is ATP-dependent protease ATPase subunit HslU (435 aa).

ATP contacts are provided by residues Ile-18, Gly-60–Glu-65, Asp-248, Glu-313, and Arg-385.

It belongs to the ClpX chaperone family. HslU subfamily. As to quaternary structure, a double ring-shaped homohexamer of HslV is capped on each side by a ring-shaped HslU homohexamer. The assembly of the HslU/HslV complex is dependent on binding of ATP.

It localises to the cytoplasm. ATPase subunit of a proteasome-like degradation complex; this subunit has chaperone activity. The binding of ATP and its subsequent hydrolysis by HslU are essential for unfolding of protein substrates subsequently hydrolyzed by HslV. HslU recognizes the N-terminal part of its protein substrates and unfolds these before they are guided to HslV for hydrolysis. The sequence is that of ATP-dependent protease ATPase subunit HslU from Sinorhizobium medicae (strain WSM419) (Ensifer medicae).